We begin with the raw amino-acid sequence, 103 residues long: Protein E7 (103 aa).

The interval 1–45 (MIGKEVTVQDFVLKLSEIQPEVLPVDLLCEEELPNEQETEEELDI) is E7 terminal domain. Residues 27 to 31 (LLCEE) carry the LXCXE motif; interaction with host RB1 and TMEM173/STING motif. Residues 56 to 94 (CGCSCCQVKLRLFVNATDSGIRTFQELLFRDLQLLCPEC) fold into a zinc finger. The Nuclear export signal motif lies at 76-84 (IRTFQELLF).

This sequence belongs to the papillomaviridae E7 protein family. In terms of assembly, homodimer. Homooligomer. Interacts with host RB1; this interaction induces dissociation of RB1-E2F1 complex thereby disrupting RB1 activity. Interacts with host EP300; this interaction represses EP300 transcriptional activity. Interacts with protein E2; this interaction inhibits E7 oncogenic activity. Interacts with host TMEM173/STING; this interaction impairs the ability of TMEM173/STING to sense cytosolic DNA and promote the production of type I interferon (IFN-alpha and IFN-beta). In terms of processing, highly phosphorylated.

Its subcellular location is the host cytoplasm. It is found in the host nucleus. Functionally, plays a role in viral genome replication by driving entry of quiescent cells into the cell cycle. Stimulation of progression from G1 to S phase allows the virus to efficiently use the cellular DNA replicating machinery to achieve viral genome replication. E7 protein has both transforming and trans-activating activities. Induces the disassembly of the E2F1 transcription factor from RB1, with subsequent transcriptional activation of E2F1-regulated S-phase genes. Interferes with host histone deacetylation mediated by HDAC1 and HDAC2, leading to transcription activation. Also plays a role in the inhibition of both antiviral and antiproliferative functions of host interferon alpha. Interaction with host TMEM173/STING impairs the ability of TMEM173/STING to sense cytosolic DNA and promote the production of type I interferon (IFN-alpha and IFN-beta). This is Protein E7 from Human papillomavirus type 8.